Reading from the N-terminus, the 619-residue chain is Putative zinc transporter At3g08650 (619 aa).

15 consecutive transmembrane segments (helical) span residues 25–45, 102–122, 129–149, 155–175, 198–218, 230–250, 261–281, 289–309, 354–374, 383–403, 405–425, 465–485, 528–548, 552–572, and 585–605; these read MMHSSCKGLVLLLFLFVVVFI, VALFTLAMAAATGLGAVPFFF, WAGICNGMAAGVMLAASFDLV, HGSGNWVVTGILAGALFIWLC, VVLVIGIMTLHSFGEGSGVGV, LLVTLAIAVHNIPEGLAVSMV, AMLWSIITSLPQPLVAVPAFL, FLPFCTGFAAGCMIWMVIAEV, GFFVSLLFGLGPLLGGVFLVA, HALLMGVASGIAFVLGLWRPL, LLLSAKMGLIPLVSLLAIGAG, LLACGAVGFHALAEGLALGVA, AAALIGFVGPISAIGSILAGI, GLDHVMVVACGGLLPSFWQVI, and VGMVLGLACAVVCLTFTRLVC.

The protein belongs to the ZIP transporter (TC 2.A.5) family. ZupT subfamily.

Its subcellular location is the membrane. Functionally, may transport zinc. In Arabidopsis thaliana (Mouse-ear cress), this protein is Putative zinc transporter At3g08650.